The sequence spans 460 residues: Cysteine--tRNA ligase (460 aa).

Cysteine 29 is a Zn(2+) binding site. Positions methionine 31–histidine 41 match the 'HIGH' region motif. Cysteine 213, histidine 238, and glutamate 242 together coordinate Zn(2+). Residues lysine 270–serine 274 carry the 'KMSKS' region motif. Residue lysine 273 participates in ATP binding.

The protein belongs to the class-I aminoacyl-tRNA synthetase family. As to quaternary structure, monomer. The cofactor is Zn(2+).

It localises to the cytoplasm. It catalyses the reaction tRNA(Cys) + L-cysteine + ATP = L-cysteinyl-tRNA(Cys) + AMP + diphosphate. This Verminephrobacter eiseniae (strain EF01-2) protein is Cysteine--tRNA ligase.